A 144-amino-acid chain; its full sequence is Superoxide dismutase [Mn], mitochondrial (144 aa).

Residues H10, H58, and D143 each coordinate Mn(2+).

Belongs to the iron/manganese superoxide dismutase family. Homotetramer. It depends on Mn(2+) as a cofactor.

It is found in the mitochondrion matrix. The catalysed reaction is 2 superoxide + 2 H(+) = H2O2 + O2. Destroys superoxide anion radicals which are normally produced within the cells and which are toxic to biological systems. The protein is Superoxide dismutase [Mn], mitochondrial of Apostichopus californicus (California sea cucumber).